A 299-amino-acid chain; its full sequence is 4-diphosphocytidyl-2-C-methyl-D-erythritol kinase (299 aa).

Residue lysine 16 is part of the active site. 101–111 (PVAAGIGGGSA) lines the ATP pocket. The active site involves aspartate 143.

This sequence belongs to the GHMP kinase family. IspE subfamily.

It catalyses the reaction 4-CDP-2-C-methyl-D-erythritol + ATP = 4-CDP-2-C-methyl-D-erythritol 2-phosphate + ADP + H(+). It functions in the pathway isoprenoid biosynthesis; isopentenyl diphosphate biosynthesis via DXP pathway; isopentenyl diphosphate from 1-deoxy-D-xylulose 5-phosphate: step 3/6. Its function is as follows. Catalyzes the phosphorylation of the position 2 hydroxy group of 4-diphosphocytidyl-2C-methyl-D-erythritol. In Rhodopseudomonas palustris (strain ATCC BAA-98 / CGA009), this protein is 4-diphosphocytidyl-2-C-methyl-D-erythritol kinase.